A 406-amino-acid chain; its full sequence is Sensor histidine kinase YxjM (406 aa).

Residues 1–13 (MNGQTPARHYYKK) lie on the Cytoplasmic side of the membrane. The helical transmembrane segment at 14-34 (LVPSLILILNCIQFLSHPTKA) threads the bilayer. At 35–36 (DP) the chain is on the extracellular side. Residues 37–57 (ILLAFVFAVYLAFIWIIPYVA) form a helical membrane-spanning segment. Ser-58 is a topological domain (cytoplasmic). A run of 2 helical transmembrane segments spans residues 59–79 (TAVS…FWAV) and 80–100 (SGQE…YAAF). A topological domain (cytoplasmic) is located at residue Arg-101. The chain crosses the membrane as a helical span at residues 102 to 122 (LPSRLSLIFTACLIGGNILLL). At 123 to 125 (SSQ) the chain is on the extracellular side. Residues 126–146 (GGSLNTIISNISIMLGLYVLF) form a helical membrane-spanning segment. Residues 147-406 (SSMRFRREAR…TNKEQKDEQR (260 aa)) are Cytoplasmic-facing. Residues 209–396 (DIHDSIGHEL…KIELSLPLMT (188 aa)) form the Histidine kinase domain. Phosphohistidine; by autocatalysis is present on His-211.

It localises to the cell membrane. It carries out the reaction ATP + protein L-histidine = ADP + protein N-phospho-L-histidine.. In terms of biological role, probable member of the two-component regulatory system YxjM/YxjL. May activate YxjL by phosphorylation. In Bacillus subtilis (strain 168), this protein is Sensor histidine kinase YxjM (yxjM).